The primary structure comprises 346 residues: GTPase Obg (346 aa).

Positions 1–158 (MFIDKAKIYV…RWIELELKLL (158 aa)) constitute an Obg domain. Residues 159 to 330 (ADVGIIGFPN…LINLIRETRD (172 aa)) form the OBG-type G domain. GTP-binding positions include 165–172 (GFPNAGKS), 190–194 (FTTLT), 212–215 (DIPG), 282–285 (NKID), and 311–313 (SLI). S172 and T192 together coordinate Mg(2+).

This sequence belongs to the TRAFAC class OBG-HflX-like GTPase superfamily. OBG GTPase family. In terms of assembly, monomer. Mg(2+) serves as cofactor.

The protein resides in the cytoplasm. Functionally, an essential GTPase which binds GTP, GDP and possibly (p)ppGpp with moderate affinity, with high nucleotide exchange rates and a fairly low GTP hydrolysis rate. Plays a role in control of the cell cycle, stress response, ribosome biogenesis and in those bacteria that undergo differentiation, in morphogenesis control. The polypeptide is GTPase Obg (Sulfurihydrogenibium sp. (strain YO3AOP1)).